The sequence spans 175 residues: Outer membrane protein assembly factor BamE (175 aa).

Residues 1 to 21 (MQNTKLLLTSFTFVGLLALAG) form the signal peptide. The N-palmitoyl cysteine moiety is linked to residue C22. C22 carries the S-diacylglycerol cysteine lipid modification. Disordered stretches follow at residues 117-147 (ALLG…KPGS) and 156-175 (IDNV…TSPQ).

The protein belongs to the BamE family. As to quaternary structure, part of the Bam complex.

It localises to the cell outer membrane. In terms of biological role, part of the outer membrane protein assembly complex, which is involved in assembly and insertion of beta-barrel proteins into the outer membrane. May have a structural role in maintaining the cell envelope integrity. The polypeptide is Outer membrane protein assembly factor BamE (Pseudomonas fluorescens).